The chain runs to 400 residues: Aspartate aminotransferase (400 aa).

The L-aspartate site is built by Gly42 and Asn180. Lys241 carries the post-translational modification N6-(pyridoxal phosphate)lysine. Arg373 is a binding site for L-aspartate.

The protein belongs to the class-I pyridoxal-phosphate-dependent aminotransferase family. In terms of assembly, homodimer. Pyridoxal 5'-phosphate serves as cofactor.

It is found in the cytoplasm. The enzyme catalyses L-aspartate + 2-oxoglutarate = oxaloacetate + L-glutamate. In Sulfolobus acidocaldarius (strain ATCC 33909 / DSM 639 / JCM 8929 / NBRC 15157 / NCIMB 11770), this protein is Aspartate aminotransferase (aspC).